The following is a 645-amino-acid chain: Acetyl-coenzyme A synthetase (645 aa).

CoA-binding positions include 190–193 (RGGR) and T308. ATP-binding positions include 384 to 386 (GEP), 408 to 413 (DTWWQT), D497, and R512. S520 provides a ligand contact to CoA. R523 lines the ATP pocket. 3 residues coordinate Mg(2+): V534, H536, and V539. At K606 the chain carries N6-acetyllysine.

Belongs to the ATP-dependent AMP-binding enzyme family. It depends on Mg(2+) as a cofactor. Acetylated. Deacetylation by the SIR2-homolog deacetylase activates the enzyme.

The enzyme catalyses acetate + ATP + CoA = acetyl-CoA + AMP + diphosphate. Catalyzes the conversion of acetate into acetyl-CoA (AcCoA), an essential intermediate at the junction of anabolic and catabolic pathways. AcsA undergoes a two-step reaction. In the first half reaction, AcsA combines acetate with ATP to form acetyl-adenylate (AcAMP) intermediate. In the second half reaction, it can then transfer the acetyl group from AcAMP to the sulfhydryl group of CoA, forming the product AcCoA. In Saccharophagus degradans (strain 2-40 / ATCC 43961 / DSM 17024), this protein is Acetyl-coenzyme A synthetase.